Consider the following 59-residue polypeptide: MNIQRAKELSVSAEQANVSFQGMPVMIQHVDESNETARIYEVKNPERELTVPVNSLEEI.

It belongs to the SspH family.

It localises to the spore core. The polypeptide is Small, acid-soluble spore protein H 2 (sspH2) (Bacillus cereus (strain ATCC 14579 / DSM 31 / CCUG 7414 / JCM 2152 / NBRC 15305 / NCIMB 9373 / NCTC 2599 / NRRL B-3711)).